We begin with the raw amino-acid sequence, 295 residues long: Bis(5'-nucleosyl)-tetraphosphatase, symmetrical (295 aa).

The disordered stretch occupies residues leucine 271–lysine 295. Positions arginine 277–lysine 295 are enriched in basic residues.

Belongs to the Ap4A hydrolase family.

The catalysed reaction is P(1),P(4)-bis(5'-adenosyl) tetraphosphate + H2O = 2 ADP + 2 H(+). Functionally, hydrolyzes diadenosine 5',5'''-P1,P4-tetraphosphate to yield ADP. This is Bis(5'-nucleosyl)-tetraphosphatase, symmetrical from Xylella fastidiosa (strain M23).